The primary structure comprises 140 residues: uncharacterized protein (140 aa).

An N-acetyltransferase domain is found at 2–140; it reads KAVIAKNEEQ…GIPHLQMMKD (139 aa).

This sequence belongs to the acetyltransferase family.

This is an uncharacterized protein from Bacillus subtilis (strain 168).